The chain runs to 446 residues: D(3) dopamine receptor (446 aa).

Topologically, residues 1-32 (MAPLSQISSHINSTCGAENSTGVNRARPHAYY) are extracellular. Residues N12 and N19 are each glycosylated (N-linked (GlcNAc...) asparagine). The helical transmembrane segment at 33 to 55 (ALSYCALILAIIFGNGLVCAAVL) threads the bilayer. Residues 56-65 (RERALQTTTN) are Cytoplasmic-facing. Residues 66–88 (YLVVSLAVADLLVATLVMPWVVY) form a helical membrane-spanning segment. Residues 89–104 (LEVTGGVWNFSRICCD) lie on the Extracellular side of the membrane. N97 carries an N-linked (GlcNAc...) asparagine glycan. A disulfide bridge connects residues C103 and C181. Residues 105 to 126 (VFVTLDVMMCTASILNLCAISI) form a helical membrane-spanning segment. At 127 to 149 (DRYTAVVMPVHYQHGTGQSSCRR) the chain is on the cytoplasmic side. Residues 150 to 170 (VALMITAVWVLAFAVSCPLLF) form a helical membrane-spanning segment. Residues 171-187 (GFNTTGDPSICSISNPD) lie on the Extracellular side of the membrane. N173 carries an N-linked (GlcNAc...) asparagine glycan. A helical transmembrane segment spans residues 188-209 (FVIYSSVVSFYVPFGVTVLVYA). Over 210 to 375 (RIYMVLRQRR…VPLREKKATQ (166 aa)) the chain is Cytoplasmic. A helical transmembrane segment spans residues 376–397 (MVVIVLGAFIVCWLPFFLTHVL). The Extracellular portion of the chain corresponds to 398 to 412 (NTHCQACHVSPELYR). Residues C401 and C404 are joined by a disulfide bond. A helical membrane pass occupies residues 413 to 432 (ATTWLGYVNSALNPVIYTTF). At 433–446 (NIEFRKAFLKILSC) the chain is on the cytoplasmic side.

The protein belongs to the G-protein coupled receptor 1 family. In terms of assembly, interacts with CLIC6. Interacts with GRK4. Interacts with PALM. Interacts with FLNA (via filamin repeat 21); increases PKA-mediated phosphorylation of FLNA. Phosphorylated by GRK4. Post-translationally, palmitoylated.

The protein resides in the cell membrane. Functionally, dopamine receptor whose activity is mediated by G proteins which inhibit adenylyl cyclase. Promotes cell proliferation. This is D(3) dopamine receptor (Drd3) from Mus musculus (Mouse).